Consider the following 560-residue polypeptide: Dihydroxy-acid dehydratase (560 aa).

Cysteine 50 serves as a coordination point for [2Fe-2S] cluster. A Mg(2+)-binding site is contributed by aspartate 82. Cysteine 123 serves as a coordination point for [2Fe-2S] cluster. The Mg(2+) site is built by aspartate 124 and lysine 125. N6-carboxylysine is present on lysine 125. Cysteine 195 contributes to the [2Fe-2S] cluster binding site. Glutamate 447 lines the Mg(2+) pocket. Serine 473 (proton acceptor) is an active-site residue.

The protein belongs to the IlvD/Edd family. In terms of assembly, homodimer. Requires [2Fe-2S] cluster as cofactor. Mg(2+) serves as cofactor.

It carries out the reaction (2R)-2,3-dihydroxy-3-methylbutanoate = 3-methyl-2-oxobutanoate + H2O. The enzyme catalyses (2R,3R)-2,3-dihydroxy-3-methylpentanoate = (S)-3-methyl-2-oxopentanoate + H2O. The protein operates within amino-acid biosynthesis; L-isoleucine biosynthesis; L-isoleucine from 2-oxobutanoate: step 3/4. Its pathway is amino-acid biosynthesis; L-valine biosynthesis; L-valine from pyruvate: step 3/4. Functions in the biosynthesis of branched-chain amino acids. Catalyzes the dehydration of (2R,3R)-2,3-dihydroxy-3-methylpentanoate (2,3-dihydroxy-3-methylvalerate) into 2-oxo-3-methylpentanoate (2-oxo-3-methylvalerate) and of (2R)-2,3-dihydroxy-3-methylbutanoate (2,3-dihydroxyisovalerate) into 2-oxo-3-methylbutanoate (2-oxoisovalerate), the penultimate precursor to L-isoleucine and L-valine, respectively. The protein is Dihydroxy-acid dehydratase of Thermosynechococcus vestitus (strain NIES-2133 / IAM M-273 / BP-1).